The following is a 354-amino-acid chain: uncharacterized protein (354 aa).

A helical transmembrane segment spans residues 43 to 63 (LIAVTLWSCVGSLLFICLLAV).

It is found in the cell membrane. This is an uncharacterized protein from Bacillus subtilis (strain 168).